We begin with the raw amino-acid sequence, 159 residues long: Small ribosomal subunit protein uS7c (159 aa).

The interval 137 to 159 (HAIRKKEETHKMAESNRAXAHYR) is disordered. The segment covering 141–150 (KKEETHKMAE) has biased composition (basic and acidic residues).

Belongs to the universal ribosomal protein uS7 family. In terms of assembly, part of the 30S ribosomal subunit.

It localises to the plastid. Its subcellular location is the chloroplast. Functionally, one of the primary rRNA binding proteins, it binds directly to 16S rRNA where it nucleates assembly of the head domain of the 30S subunit. The protein is Small ribosomal subunit protein uS7c (rps7) of Sciadopitys verticillata (Japanese umbrella-pine).